Consider the following 542-residue polypeptide: Putative sodium-dependent excitatory amino acid transporter glt-6 (542 aa).

The Cytoplasmic segment spans residues 1–15; that stretch reads MKSKRRDDIVQFCRE. Helical transmembrane passes span 16-36, 55-75, and 93-113; these read NTLLVMTMFSVFLGVVLGFGL, IFMQVLKMMILPLIFSSLISA, and LYYLSTAVLATILGIFLVTVI. The Extracellular portion of the chain corresponds to 114-191; it reads HPGDPSIKGT…IVKRSIGMTK (78 aa). Residue Asn175 is glycosylated (N-linked (GlcNAc...) asparagine). Transmembrane regions (helical) follow at residues 192-212, 234-254, 265-285, 303-323, and 386-406; these read GMNILGIIVFCTGFGIVISQL, VVTLMWFAPLGITCLICGNLL, VLALYVFTVCAGLILHTIITV, GMIQAAVTAFGTASGGATLPM, and TIASIGLGSVPAGLVSILLIL. The span at 505-517 shows a compositional bias: low complexity; the sequence is RIGSRIGSRRPSS. The disordered stretch occupies residues 505-542; sequence RIGSRIGSRRPSSTNLHLSWRNNNIEPPYTPLPNDENV. Polar residues predominate over residues 518–529; that stretch reads TNLHLSWRNNNI.

It belongs to the dicarboxylate/amino acid:cation symporter (DAACS) (TC 2.A.23) family.

It localises to the membrane. In Caenorhabditis elegans, this protein is Putative sodium-dependent excitatory amino acid transporter glt-6 (glt-6).